A 298-amino-acid polypeptide reads, in one-letter code: Ankyrin repeat domain-containing protein 29 (298 aa).

ANK repeat units lie at residues 8–38, 42–71, 75–104, 108–137, 141–170, 174–203, 207–236, and 239–268; these read PLAN…DVDC, YGTT…DINL, TGST…STEF, DGGT…NVHD, DGAT…KVNQ, DGTA…DRDA, DGST…SLGI, and NGST…DPAL.

This chain is Ankyrin repeat domain-containing protein 29 (ankrd29), found in Danio rerio (Zebrafish).